Reading from the N-terminus, the 236-residue chain is Large ribosomal subunit protein uL1 (236 aa).

The protein belongs to the universal ribosomal protein uL1 family. In terms of assembly, part of the 50S ribosomal subunit.

Binds directly to 23S rRNA. The L1 stalk is quite mobile in the ribosome, and is involved in E site tRNA release. Its function is as follows. Protein L1 is also a translational repressor protein, it controls the translation of the L11 operon by binding to its mRNA. The chain is Large ribosomal subunit protein uL1 from Corynebacterium jeikeium (strain K411).